The primary structure comprises 22 residues: Conotoxin MIIIJ (22 aa).

Residue Gln-1 is modified to Pyrrolidone carboxylic acid. Intrachain disulfides connect Cys-3–Cys-21, Cys-4–Cys-19, and Cys-9–Cys-22.

The protein belongs to the conotoxin M superfamily. In terms of tissue distribution, expressed by the venom duct.

The protein localises to the secreted. Probable competitive antagonist of fish muscle acetylcholine receptor. Inhibits postsynaptic nicotinic acetylcholine receptors (nAChRs) from fish (zebrafish and goldfish) and frogs (IC(50)=0.1 uM). Protects these receptors from block by alpha-bungarotoxin and alpha-conotoxin EI. Does not block nAChRs at the neuromuscular junction of Rana pipiens. Shows a weak inhibition on mammalian adult and fetal muscle nAChRs (alpha-1-beta-1-delta-epsilon/CHRNA1-CHRNB1-CHRND-CHRNE and alpha-1 beta-1 gamma delta/CHRNA1-CHRNB1-CHRNG-CHRND) (IC(50)=3-45 uM). In vivo, induces paralysis in goldfish (Carassius auratus) but not mice. The chain is Conotoxin MIIIJ from Conus magus (Magical cone).